We begin with the raw amino-acid sequence, 101 residues long: MTKQSIRAREFKRIILAKKFFAKRIKLKQIISNIHSSSEERWNAIIKLQQLPRDSSRSRQRNRCSQTGRPHAFLRKFGLSRIKVREAAMRGEIPGLRKASW.

This sequence belongs to the universal ribosomal protein uS14 family. As to quaternary structure, part of the 30S ribosomal subunit. Contacts proteins S3 and S10.

In terms of biological role, binds 16S rRNA, required for the assembly of 30S particles and may also be responsible for determining the conformation of the 16S rRNA at the A site. The chain is Small ribosomal subunit protein uS14 from Baumannia cicadellinicola subsp. Homalodisca coagulata.